Here is an 876-residue protein sequence, read N- to C-terminus: Alanine--tRNA ligase (876 aa).

Histidine 566, histidine 570, cysteine 667, and histidine 671 together coordinate Zn(2+).

It belongs to the class-II aminoacyl-tRNA synthetase family. Zn(2+) is required as a cofactor.

It localises to the cytoplasm. The enzyme catalyses tRNA(Ala) + L-alanine + ATP = L-alanyl-tRNA(Ala) + AMP + diphosphate. Functionally, catalyzes the attachment of alanine to tRNA(Ala) in a two-step reaction: alanine is first activated by ATP to form Ala-AMP and then transferred to the acceptor end of tRNA(Ala). Also edits incorrectly charged Ser-tRNA(Ala) and Gly-tRNA(Ala) via its editing domain. This chain is Alanine--tRNA ligase, found in Albidiferax ferrireducens (strain ATCC BAA-621 / DSM 15236 / T118) (Rhodoferax ferrireducens).